Reading from the N-terminus, the 98-residue chain is uncharacterized protein (98 aa).

Transmembrane regions (helical) follow at residues 13–33 (LFSLAINEPSPTFALTIIAIF) and 65–85 (IMVIISYLKYVNLPCSFIFIS).

It localises to the membrane. This is an uncharacterized protein from Saccharomyces cerevisiae (strain ATCC 204508 / S288c) (Baker's yeast).